A 434-amino-acid polypeptide reads, in one-letter code: Oxysterol-binding protein homolog 4 (434 aa).

Residues 7–29 form an ALPS motif region; sequence SSSWTSFLKSIASFNGDLSSLSA. The interval 16-366 is OSBP-related domain (ORD); the sequence is SIASFNGDLS…WQRRWFKDFD (351 aa). An a 1,2-diacyl-sn-glycero-3-phospho-(1D-myo-inositol 4-phosphate)-binding site is contributed by 24-29; that stretch reads LSSLSA. Glutamine 96 contributes to the 20-hydroxycholesterol binding site. Glutamine 96 provides a ligand contact to 25-hydroxycholesterol. Residues glutamine 96 and arginine 100 each contribute to the 7beta-hydroxycholesterol site. Residue glutamine 96 coordinates cholesterol. Residue glutamine 96 participates in ergosterol binding. Residues 109–112, 143–144, lysine 336, glutamate 340, and arginine 344 each bind a 1,2-diacyl-sn-glycero-3-phospho-(1D-myo-inositol 4-phosphate); these read KPLN and HH. Threonine 370 carries the post-translational modification Phosphothreonine. Serine 389 carries the phosphoserine modification.

The protein belongs to the OSBP family.

The protein resides in the cytoplasm. It localises to the golgi apparatus membrane. Lipid transport protein (LTP) involved in non-vesicular transfer of lipids between membranes. Functions in phosphoinositide-coupled directional transport of various lipids by carrying the lipid molecule in a hydrophobic pocket and transferring it between membranes through the cytosol. Involved in maintenance of intracellular sterol distribution and homeostasis. Involved in lipid countertransport between the Golgi complex and membranes of the endoplasmic reticulum. Specifically exchanges sterol with phosphatidylinositol 4-phosphate (PI4P), delivering sterol to the Golgi in exchange for PI4P, which is delivered to the ER-localized PI4P phosphatase SAC1 for degradation. Thus, by maintaining a PI4P gradient at the ER/Golgi interface, SAC1 may drive PS transport. Displays a similar affinity for PI4P and sterols. Binds sterol and PI4P in a mutually exclusive manner. Involved in ergosterol transport from the plasma membrane (PM) to the ER. Mediates sterol transport from the ER to mitochondria. Involved in the negative regulation of Golgi-derived transport vesicle biogenesis. Plays a role in the positive regulation of vesicular transport of ceramide from the ER to the Golgi, negatively regulating COPII-mediated ER export of cargos. This chain is Oxysterol-binding protein homolog 4, found in Saccharomyces cerevisiae (strain ATCC 204508 / S288c) (Baker's yeast).